Reading from the N-terminus, the 619-residue chain is ATP-dependent DNA helicase RecQ (619 aa).

In terms of domain architecture, Helicase ATP-binding spans 37 to 205 (INAALNGQDA…LRHLNLKNLH (169 aa)). ATP is bound at residue 50–57 (MATGNGKS). The DEAH box motif lies at 149–152 (DEAH). One can recognise a Helicase C-terminal domain in the interval 229–374 (QLTRFVLAQK…QIEQHKLEAI (146 aa)). Zn(2+) is bound by residues C383, C400, C403, and C406. The region spanning 535–615 (ANYDKDLFAR…QEHKAILANA (81 aa)) is the HRDC domain.

This sequence belongs to the helicase family. RecQ subfamily. It depends on Mg(2+) as a cofactor. Zn(2+) serves as cofactor.

The catalysed reaction is Couples ATP hydrolysis with the unwinding of duplex DNA by translocating in the 3'-5' direction.. The enzyme catalyses ATP + H2O = ADP + phosphate + H(+). In terms of biological role, an ATP-dependent DNA helicase which unwinds DNA in a 3'-5' direction. Plays a role in recombination. This chain is ATP-dependent DNA helicase RecQ, found in Haemophilus influenzae (strain ATCC 51907 / DSM 11121 / KW20 / Rd).